The following is a 37-amino-acid chain: Large ribosomal subunit protein bL36 (37 aa).

This sequence belongs to the bacterial ribosomal protein bL36 family.

The protein is Large ribosomal subunit protein bL36 of Thermomicrobium roseum (strain ATCC 27502 / DSM 5159 / P-2).